Reading from the N-terminus, the 251-residue chain is Flap endonuclease Xni (251 aa).

Asp-104 serves as a coordination point for Mg(2+). The 5'-3' exonuclease domain occupies 160–249 (VQPQQLPDYW…IDGNLQQLRL (90 aa)). K(+) contacts are provided by Leu-171, Ala-172, Pro-180, Val-182, and Ile-185. The tract at residues 184 to 189 (GIGPKS) is interaction with DNA.

This sequence belongs to the Xni family. It depends on Mg(2+) as a cofactor. The cofactor is K(+).

Its function is as follows. Has flap endonuclease activity. During DNA replication, flap endonucleases cleave the 5'-overhanging flap structure that is generated by displacement synthesis when DNA polymerase encounters the 5'-end of a downstream Okazaki fragment. This Escherichia coli O45:K1 (strain S88 / ExPEC) protein is Flap endonuclease Xni.